The sequence spans 304 residues: Foldase protein PrsA (304 aa).

An N-terminal signal peptide occupies residues 1–19 (MKKKLLSVAAVASVFTLAA). C20 carries N-palmitoyl cysteine lipidation. Residue C20 is the site of S-diacylglycerol cysteine attachment. The PpiC domain maps to 140 to 231 (KVEVKASHIL…FGYHIIKVTD (92 aa)). Residues 285–304 (FDLDKQEQQQMQQQMQQQQQ) are disordered. The segment covering 292–304 (QQQMQQQMQQQQQ) has biased composition (low complexity).

This sequence belongs to the PrsA family.

The protein localises to the cell membrane. It carries out the reaction [protein]-peptidylproline (omega=180) = [protein]-peptidylproline (omega=0). Plays a major role in protein secretion by helping the post-translocational extracellular folding of several secreted proteins. This Exiguobacterium sibiricum (strain DSM 17290 / CCUG 55495 / CIP 109462 / JCM 13490 / 255-15) protein is Foldase protein PrsA.